A 100-amino-acid polypeptide reads, in one-letter code: Vesicle-associated membrane protein 8 (100 aa).

The Cytoplasmic segment spans residues 1–74 (MEASGSAGND…ARKFWWKNVK (74 aa)). Serine 4 and serine 17 each carry phosphoserine. One can recognise a v-SNARE coiled-coil homology domain in the interval 11 to 71 (RVRNLQSEVE…QKVARKFWWK (61 aa)). 3 positions are modified to phosphothreonine: threonine 27, threonine 47, and threonine 53. Residue serine 54 is modified to Phosphoserine. The chain crosses the membrane as a helical; Anchor for type IV membrane protein span at residues 75-95 (MIVIICVIVLIILILIILFAT). At 96–100 (GTIPT) the chain is on the vesicular side.

This sequence belongs to the synaptobrevin family. In terms of assembly, forms a SNARE complex composed of VAMP8, SNAP29 and STX17 involved in fusion of autophagosome with lysosome. Found in a number of SNARE complexes with NAPA, SNAP23, SNAP25, STX1A, STX4, STX7, STX8 and VTI1B. Interacts with PICALM. SNARE complex formation and binding by PICALM are mutually exclusive processes for VAMP8. Interacts with SBF2/MTMR13. Interacts with RAB21 (in GTP-bound form) in response to starvation; the interaction probably regulates VAMP8 endolysosomal trafficking. Interacts with STX17; this interaction is increased in the absence of TMEM39A. Interacts with TRIM6. Expressed (at protein level) at a high level in kidney, lung and spleen; at a lower level in testis, liver, brain and heart. Expressed in kidney and retinal pigment epithelium derived cell line.

It is found in the lysosome membrane. The protein localises to the late endosome membrane. Its subcellular location is the early endosome membrane. The protein resides in the midbody. It localises to the cell membrane. It is found in the zymogen granule membrane. Functionally, SNAREs, soluble N-ethylmaleimide-sensitive factor-attachment protein receptors, are essential proteins for fusion of cellular membranes. SNAREs localized on opposing membranes assemble to form a trans-SNARE complex, an extended, parallel four alpha-helical bundle that drives membrane fusion. VAMP8 is a SNARE involved in autophagy through the direct control of autophagosome membrane fusion with the lysososome membrane via its interaction with the STX17-SNAP29 binary t-SNARE complex. Also required for dense-granule secretion in platelets. Also plays a role in regulated enzyme secretion in pancreatic acinar cells. Involved in the abscission of the midbody during cell division, which leads to completely separate daughter cells. Involved in the homotypic fusion of early and late endosomes. Also participates in the activation of type I interferon antiviral response through a TRIM6-dependent mechanism. This chain is Vesicle-associated membrane protein 8, found in Rattus norvegicus (Rat).